We begin with the raw amino-acid sequence, 399 residues long: Lipoyl synthase, mitochondrial (399 aa).

The transit peptide at 1 to 14 (MALISRSCGAASRY) directs the protein to the mitochondrion. A compositionally biased stretch (low complexity) spans 39–52 (AASTSSSSSPSPST). Positions 39-60 (AASTSSSSSPSPSTHNDRKKDL) are disordered. Residues cysteine 128, cysteine 133, cysteine 139, cysteine 159, cysteine 163, cysteine 166, and serine 374 each coordinate [4Fe-4S] cluster. A Radical SAM core domain is found at 144-363 (EYATATATIM…EKVGQEMGFI (220 aa)).

The protein belongs to the radical SAM superfamily. Lipoyl synthase family. [4Fe-4S] cluster is required as a cofactor.

Its subcellular location is the mitochondrion. It catalyses the reaction [[Fe-S] cluster scaffold protein carrying a second [4Fe-4S](2+) cluster] + N(6)-octanoyl-L-lysyl-[protein] + 2 oxidized [2Fe-2S]-[ferredoxin] + 2 S-adenosyl-L-methionine + 4 H(+) = [[Fe-S] cluster scaffold protein] + N(6)-[(R)-dihydrolipoyl]-L-lysyl-[protein] + 4 Fe(3+) + 2 hydrogen sulfide + 2 5'-deoxyadenosine + 2 L-methionine + 2 reduced [2Fe-2S]-[ferredoxin]. The protein operates within protein modification; protein lipoylation via endogenous pathway; protein N(6)-(lipoyl)lysine from octanoyl-[acyl-carrier-protein]: step 2/2. In terms of biological role, catalyzes the radical-mediated insertion of two sulfur atoms into the C-6 and C-8 positions of the octanoyl moiety bound to the lipoyl domains of lipoate-dependent enzymes, thereby converting the octanoylated domains into lipoylated derivatives. The protein is Lipoyl synthase, mitochondrial (lias) of Danio rerio (Zebrafish).